The chain runs to 253 residues: MADAPYKLILLRHGESEWNAKNLFTGWVDVNLNEKGEKEAVRGGELLKDAGLLPDVVHTSLQKRAIRTAQLALESADRHWIPVHRSWRLNERHYGALQGKDKAQTLAEFGEEQFMLWRRSYDTPPPPLADGSEFSQSDDPRYASIPPELRPKTECLKDVVNRMLPYWYDGIVPDLLTGRTVLVAAHGNSLRALVKHLDGISDEDIAGLNIPTGIPLSYELDTDFKPLNPGGTYLDPDAAAAAIEAVKNQGKKK.

Substrate contacts are provided by residues 12 to 19 (RHGESEWN), 25 to 26 (TG), Arg64, 91 to 94 (ERHY), Lys102, and 118 to 119 (RR). The Tele-phosphohistidine intermediate role is filled by His13. Glu91 functions as the Proton donor/acceptor in the catalytic mechanism. The disordered stretch occupies residues 126-148 (PPLADGSEFSQSDDPRYASIPPE). 187–188 (GN) contacts substrate.

Belongs to the phosphoglycerate mutase family. BPG-dependent PGAM subfamily.

It carries out the reaction (2R)-2-phosphoglycerate = (2R)-3-phosphoglycerate. The protein operates within carbohydrate degradation; glycolysis; pyruvate from D-glyceraldehyde 3-phosphate: step 3/5. Catalyzes the interconversion of 2-phosphoglycerate and 3-phosphoglycerate. In Streptomyces avermitilis (strain ATCC 31267 / DSM 46492 / JCM 5070 / NBRC 14893 / NCIMB 12804 / NRRL 8165 / MA-4680), this protein is 2,3-bisphosphoglycerate-dependent phosphoglycerate mutase.